The primary structure comprises 277 residues: Phosphate import ATP-binding protein PstB 2 (277 aa).

The region spanning 31–272 (IEVPGLNLFY…PAKKQTEDYI (242 aa)) is the ABC transporter domain. 63–70 (GPSGCGKS) is an ATP binding site.

The protein belongs to the ABC transporter superfamily. Phosphate importer (TC 3.A.1.7) family. As to quaternary structure, the complex is composed of two ATP-binding proteins (PstB), two transmembrane proteins (PstC and PstA) and a solute-binding protein (PstS).

Its subcellular location is the cell inner membrane. The catalysed reaction is phosphate(out) + ATP + H2O = ADP + 2 phosphate(in) + H(+). Part of the ABC transporter complex PstSACB involved in phosphate import. Responsible for energy coupling to the transport system. This chain is Phosphate import ATP-binding protein PstB 2, found in Pseudomonas syringae pv. syringae (strain B728a).